A 134-amino-acid polypeptide reads, in one-letter code: Lymphocyte antigen 6A-2/6E-1 (134 aa).

The signal sequence occupies residues 1 to 26; it reads MDTSHTTKSCLLILLVALLCAERAQG. Residues 27-119 enclose the UPAR/Ly6 domain; sequence LECYQCYGVP…NGGSTWTMAG (93 aa). Intrachain disulfides connect C29/C53, C32/C41, C46/C74, C78/C98, and C99/C104. G112 carries the GPI-anchor amidated glycine lipid modification. A propeptide spans 113 to 134 (removed in mature form); it reads STWTMAGVLLFSLSSVLLQTLL.

Post-translationally, O-glycosylated. Not N-glycosylated. In terms of processing, not phosphorylated. Widely expressed.

It is found in the cell membrane. Its function is as follows. T-cell activation. The sequence is that of Lymphocyte antigen 6A-2/6E-1 (Ly6a) from Mus musculus (Mouse).